Consider the following 478-residue polypeptide: Chromosomal replication initiator protein DnaA (478 aa).

Residues Met1–Tyr82 are domain I, interacts with DnaA modulators. The domain II stretch occupies residues Tyr82–Ser140. Positions Gln141–Ser358 are domain III, AAA+ region. The ATP site is built by Gly186, Gly188, Lys189, and Thr190. The tract at residues Ser359–Leu478 is domain IV, binds dsDNA.

Belongs to the DnaA family. As to quaternary structure, oligomerizes as a right-handed, spiral filament on DNA at oriC.

The protein resides in the cytoplasm. Its function is as follows. Plays an essential role in the initiation and regulation of chromosomal replication. ATP-DnaA binds to the origin of replication (oriC) to initiate formation of the DNA replication initiation complex once per cell cycle. Binds the DnaA box (a 9 base pair repeat at the origin) and separates the double-stranded (ds)DNA. Forms a right-handed helical filament on oriC DNA; dsDNA binds to the exterior of the filament while single-stranded (ss)DNA is stabiized in the filament's interior. The ATP-DnaA-oriC complex binds and stabilizes one strand of the AT-rich DNA unwinding element (DUE), permitting loading of DNA polymerase. After initiation quickly degrades to an ADP-DnaA complex that is not apt for DNA replication. Binds acidic phospholipids. The sequence is that of Chromosomal replication initiator protein DnaA from Flavobacterium psychrophilum (strain ATCC 49511 / DSM 21280 / CIP 103535 / JIP02/86).